Consider the following 404-residue polypeptide: Phosphoribulokinase, chloroplastic (404 aa).

A chloroplast-targeting transit peptide spans Met1–Cys53. Cys69 and Cys108 are oxidised to a cystine.

This sequence belongs to the phosphoribulokinase family.

The protein resides in the plastid. It localises to the chloroplast. The catalysed reaction is D-ribulose 5-phosphate + ATP = D-ribulose 1,5-bisphosphate + ADP + H(+). Its pathway is carbohydrate biosynthesis; Calvin cycle. Light regulated via thioredoxin by reversible oxidation/reduction of sulfhydryl/disulfide groups. This Triticum aestivum (Wheat) protein is Phosphoribulokinase, chloroplastic.